A 424-amino-acid polypeptide reads, in one-letter code: Protein maelstrom 1 (424 aa).

The segment at residues 2–69 (PPKKHSGFMM…LTRVKKERLN (68 aa)) is a DNA-binding region (HMG box).

It belongs to the maelstrom family.

Its subcellular location is the cytoplasm. The protein resides in the nucleus. In terms of biological role, involved both in the piRNA and miRNA metabolic processes. As a component of the meiotic nuage, plays a central role during oogenesis by repressing transposable elements and preventing their mobilization, which is essential for the germline integrity. Repression of transposable elements is mediated via the piRNA metabolic process, which mediates the repression of transposable elements during meiosis by forming complexes composed of piRNAs and Piwi proteins and governs the repression of transposons. As a nuclear component, it is required for proper differentiation in the germline stem cell (GSC) lineage by repressing microRNA-7 (miR-7), thereby acting as an indirect regulator of bag-of-marbles (Bam). Acts by binding to the promoter of miR-7 gene and repressing its expression; miR-7 repression alleviates the Bam repression by miR-7, thereby allowing differentiation in the germline stem cell (GSC) lineage. This chain is Protein maelstrom 1 (mael1), found in Drosophila ananassae (Fruit fly).